A 373-amino-acid chain; its full sequence is MTDNSKIRVVVGMSGGVDSSVTALLLKEQGYDVIGVFMKNWDDTDEFGVCTATEDYKDVAAVADQIGIPYYSVNFEKEYWDRVFEYFLAEYRAGRTPNPDVMCNKEIKFKAFLGYAMTLGADYVATGHYAQVKRDENGTVHMLRGADNGKDQTYFLSQLSQEQLQKTLFPLGHLQKSEVREIAERAGLATAKKKDSTGICFIGEKNFKQFLSQYLPAQKGRMMTIDGRDMGEHAGLMYYTIGQRGGLGIGGQHGGDNQPWFVVGKDLSQNILYVGQGFYHEALMSNSLDASVIHFTREMPEEFTFECTAKFRYRQPDSQVTVHVRGDKAEVVFAEPQRAITPGQAVVFYDGKECLGGGMIDMAYKNGQPCQYI.

ATP-binding positions include 12–19 (GMSGGVDS) and Met-38. Residues 98 to 100 (NPD) form an interaction with target base in tRNA region. Residue Cys-103 is the Nucleophile of the active site. The cysteines at positions 103 and 200 are disulfide-linked. Residue Gly-127 participates in ATP binding. Residues 150-152 (KDQ) are interaction with tRNA. Residue Cys-200 is the Cysteine persulfide intermediate of the active site. The segment at 312–313 (RY) is interaction with tRNA.

This sequence belongs to the MnmA/TRMU family.

The protein localises to the cytoplasm. The enzyme catalyses S-sulfanyl-L-cysteinyl-[protein] + uridine(34) in tRNA + AH2 + ATP = 2-thiouridine(34) in tRNA + L-cysteinyl-[protein] + A + AMP + diphosphate + H(+). Functionally, catalyzes the 2-thiolation of uridine at the wobble position (U34) of tRNA, leading to the formation of s(2)U34. This is tRNA-specific 2-thiouridylase MnmA from Streptococcus pyogenes serotype M18 (strain MGAS8232).